Here is a 618-residue protein sequence, read N- to C-terminus: Grainyhead-like protein 1 homolog (618 aa).

The transcription activation stretch occupies residues Met-1 to Ser-91. Positions Arg-74–Lys-92 are enriched in basic and acidic residues. The tract at residues Arg-74 to Asn-94 is disordered. At Thr-208 the chain carries Phosphothreonine. The Grh/CP2 DB domain occupies Ser-248 to Ile-474. Interaction with DNA stretches follow at residues Thr-380 to Lys-389 and Arg-427 to Arg-430.

Belongs to the grh/CP2 family. Grainyhead subfamily. Binds DNA as homodimer. Homodimer, also forms heterodimers with GRHL2 or GRHL3. Methylation at Arg-9 and Lys-116 may be involved in regulating transcriptional activation. In terms of tissue distribution, isoform 1 is highly expressed in brain, pancreas, tonsil, placenta and kidney. Isoform 2 is highly expressed in brain and liver. Expressed at very low levels in non-steroidogenic cells.

It localises to the nucleus. In terms of biological role, transcription factor involved in epithelial development. Binds directly to the consensus DNA sequence 5'-AACCGGTT-3'. Important regulator of DSG1 in the context of hair anchorage and epidermal differentiation, participates in the maintenance of the skin barrier. There is no genetic interaction with GRHL3, nor functional cooperativity due to diverse target gene selectivity during epithelia development. May play a role in regulating glucose homeostasis and insulin signaling. Functionally, functions as a transcription activator. May function as a repressor in tissues where both isoform 1 and isoform 2 are expressed. The chain is Grainyhead-like protein 1 homolog from Homo sapiens (Human).